We begin with the raw amino-acid sequence, 643 residues long: MADVPADLAAVWPRVLEQLLGEGRGQGVEAKDEHWIRRCQPLALVADTALLAVPNEFAKGVLEGRLAPIVSETLSRECGRPIRIAITVDDSAGEPPPAAPPAQQTPKPRYEEPELPSGPYEGYGRHRGGADQLPGTEPRPEQLPSARPDQLPTVRPAYPSEYHRPEPGAWPRPAQDEYGWQQPRLGFPERDPYASPSSQDAYGSPSQDYRPQGMDRPPYEQQRGDYDTPRAEYEPARPDYDSARPDYESARPEYDQRDPVRRELPEPPAHRGGPGADMPSAGAPGPPAAQPAPASGPGEPTARLNPKYLFDTFVIGASNRFAHAAAVAVAEAPAKAYNPLFIYGESGLGKTHLLHAIGHYARSLYPGTRVRYVSSEEFTNEFINSIRDGKGDSFRKRYREMDILLVDDIQFLADKESTQEEFFHTFNTLHNANKQIVLSSDRPPKQLVTLEDRLRNRFEWGLITDVQPPELETRIAILRKKAVQEQLNAPPEVLEFIASRISRNIRELEGALIRVTAFASLNRQPVDLGLTEIVLKDLIPGGEDSTPEITATAIMAATADYFGLTVDDLCGSSRGRQLVTARQIAMYLCRELTDLSLPKIGAQFGGRDHTTVMHADRKIRALMAERRSIYNQVTELTNRIKNG.

The segment at 1 to 97 (MADVPADLAA…VDDSAGEPPP (97 aa)) is domain I, interacts with DnaA modulators. Positions 87–303 (TVDDSAGEPP…ASGPGEPTAR (217 aa)) are disordered. Residues 97 to 302 (PAAPPAQQTP…PASGPGEPTA (206 aa)) form a domain II region. Residues 195-209 (SPSSQDAYGSPSQDY) show a composition bias toward polar residues. The segment covering 222-269 (QRGDYDTPRAEYEPARPDYDSARPDYESARPEYDQRDPVRRELPEPPA) has biased composition (basic and acidic residues). The span at 291–300 (PAPASGPGEP) shows a compositional bias: low complexity. A domain III, AAA+ region region spans residues 303-519 (RLNPKYLFDT…GALIRVTAFA (217 aa)). Residues glycine 347, glycine 349, lysine 350, and threonine 351 each coordinate ATP. The tract at residues 520 to 643 (SLNRQPVDLG…TELTNRIKNG (124 aa)) is domain IV, binds dsDNA.

The protein belongs to the DnaA family. Oligomerizes as a right-handed, spiral filament on DNA at oriC.

It localises to the cytoplasm. In terms of biological role, plays an essential role in the initiation and regulation of chromosomal replication. ATP-DnaA binds to the origin of replication (oriC) to initiate formation of the DNA replication initiation complex once per cell cycle. Binds the DnaA box (a 9 base pair repeat at the origin) and separates the double-stranded (ds)DNA. Forms a right-handed helical filament on oriC DNA; dsDNA binds to the exterior of the filament while single-stranded (ss)DNA is stabiized in the filament's interior. The ATP-DnaA-oriC complex binds and stabilizes one strand of the AT-rich DNA unwinding element (DUE), permitting loading of DNA polymerase. After initiation quickly degrades to an ADP-DnaA complex that is not apt for DNA replication. Binds acidic phospholipids. This is Chromosomal replication initiator protein DnaA from Streptomyces reticuli.